The primary structure comprises 171 residues: Protein phosphatase 1 regulatory subunit 1A (171 aa).

M1 is subject to N-acetylmethionine. Positions 9 to 12 are essential for activity; sequence KIQF. Positions 17 to 171 are disordered; it reads LEPHLDPEAA…PLDSQGASLV (155 aa). Over residues 19-29 the composition is skewed to basic and acidic residues; it reads PHLDPEAAEQI. T35 carries the phosphothreonine; by PKA modification. The tract at residues 42–54 is essential for activity; it reads TSDQSSPEVDEDR. Phosphoserine occurs at positions 43, 46, 47, and 67. A compositionally biased stretch (polar residues) spans 122–133; that stretch reads GSASRPDTSGTA. Basic and acidic residues predominate over residues 137–148; it reads AESKPKTQEQRG. Residues 143 to 171 form an interaction with PPP1R15A region; sequence TQEQRGVEPSTEDLSAHMLPLDSQGASLV.

This sequence belongs to the protein phosphatase inhibitor 1 family. Interacts with PPP1R15A. Phosphorylation of Thr-35 is required for activity.

Inhibitor of protein-phosphatase 1. This protein may be important in hormonal control of glycogen metabolism. Hormones that elevate intracellular cAMP increase I-1 activity in many tissues. I-1 activation may impose cAMP control over proteins that are not directly phosphorylated by PKA. Following a rise in intracellular calcium, I-1 is inactivated by calcineurin (or PP2B). Does not inhibit type-2 phosphatases. The protein is Protein phosphatase 1 regulatory subunit 1A (Ppp1r1a) of Rattus norvegicus (Rat).